Here is a 556-residue protein sequence, read N- to C-terminus: 2-succinyl-5-enolpyruvyl-6-hydroxy-3-cyclohexene-1-carboxylate synthase (556 aa).

It belongs to the TPP enzyme family. MenD subfamily. In terms of assembly, homodimer. Mg(2+) serves as cofactor. Mn(2+) is required as a cofactor. Requires thiamine diphosphate as cofactor.

It carries out the reaction isochorismate + 2-oxoglutarate + H(+) = 5-enolpyruvoyl-6-hydroxy-2-succinyl-cyclohex-3-ene-1-carboxylate + CO2. It functions in the pathway quinol/quinone metabolism; 1,4-dihydroxy-2-naphthoate biosynthesis; 1,4-dihydroxy-2-naphthoate from chorismate: step 2/7. Its pathway is quinol/quinone metabolism; menaquinone biosynthesis. In terms of biological role, catalyzes the thiamine diphosphate-dependent decarboxylation of 2-oxoglutarate and the subsequent addition of the resulting succinic semialdehyde-thiamine pyrophosphate anion to isochorismate to yield 2-succinyl-5-enolpyruvyl-6-hydroxy-3-cyclohexene-1-carboxylate (SEPHCHC). The sequence is that of 2-succinyl-5-enolpyruvyl-6-hydroxy-3-cyclohexene-1-carboxylate synthase from Saccharopolyspora erythraea (strain ATCC 11635 / DSM 40517 / JCM 4748 / NBRC 13426 / NCIMB 8594 / NRRL 2338).